Here is a 423-residue protein sequence, read N- to C-terminus: Protein TylM3 (423 aa).

The span at 1-21 (MNTAAGPTGTAAGGTTAPAAA) shows a compositional bias: low complexity. Disordered regions lie at residues 1–26 (MNTAAGPTGTAAGGTTAPAAAHDLSR) and 117–149 (GSALDAAHGNPGGPPLPGGWPHRPPDREERDDP). Residues 139 to 149 (RPPDREERDDP) are compositionally biased toward basic and acidic residues.

This sequence belongs to the cytochrome P450 family.

The protein operates within antibiotic biosynthesis; tylosin biosynthesis. Functionally, involved in the biosynthesis of the macrolide antibiotic tylosin derived from the polyketide lactone tylactone. TylM3 is required for the glycosylation of the 5-hydroxyl group of tylactone to yield 5-O-mycaminosytylactone. This is Protein TylM3 from Streptomyces fradiae (Streptomyces roseoflavus).